We begin with the raw amino-acid sequence, 452 residues long: THO complex subunit 5A (452 aa).

This sequence belongs to the THOC5 family. Component of the THO complex, which is composed of THO1, THO2, THO3, THO5, THO6 and THO7.

The protein localises to the nucleus. Functionally, acts as a component of the THO subcomplex of the TREX complex which is thought to couple mRNA transcription, processing and nuclear export. The polypeptide is THO complex subunit 5A (THO5A) (Arabidopsis thaliana (Mouse-ear cress)).